The following is a 160-amino-acid chain: Cytochrome b6-f complex subunit 4 (160 aa).

Transmembrane regions (helical) follow at residues 36-56, 95-115, and 131-151; these read LLYI…GLAV, LLGI…PFIE, and AVFL…TLPI.

It belongs to the cytochrome b family. PetD subfamily. As to quaternary structure, the 4 large subunits of the cytochrome b6-f complex are cytochrome b6, subunit IV (17 kDa polypeptide, PetD), cytochrome f and the Rieske protein, while the 4 small subunits are PetG, PetL, PetM and PetN. The complex functions as a dimer.

It localises to the cellular thylakoid membrane. Functionally, component of the cytochrome b6-f complex, which mediates electron transfer between photosystem II (PSII) and photosystem I (PSI), cyclic electron flow around PSI, and state transitions. The polypeptide is Cytochrome b6-f complex subunit 4 (Trichodesmium erythraeum (strain IMS101)).